We begin with the raw amino-acid sequence, 493 residues long: Cysteine--tRNA ligase (493 aa).

Cys-41 contacts Zn(2+). Positions 43 to 53 (PTVYNYPHIGN) match the 'HIGH' region motif. Residues Cys-231, His-256, and Glu-260 each contribute to the Zn(2+) site. Positions 296 to 300 (KMSKS) match the 'KMSKS' region motif. Lys-299 contacts ATP.

Belongs to the class-I aminoacyl-tRNA synthetase family. In terms of assembly, monomer. Zn(2+) is required as a cofactor.

Its subcellular location is the cytoplasm. The enzyme catalyses tRNA(Cys) + L-cysteine + ATP = L-cysteinyl-tRNA(Cys) + AMP + diphosphate. This is Cysteine--tRNA ligase from Novosphingobium aromaticivorans (strain ATCC 700278 / DSM 12444 / CCUG 56034 / CIP 105152 / NBRC 16084 / F199).